The chain runs to 436 residues: F-box/LRR-repeat protein 20 (436 aa).

The region spanning 22–68 (AVINKKLPKELLLRIFSFLDVVTLCRCAQVSRAWNVLALDGSNWQRI) is the F-box domain. LRR repeat units follow at residues 74-100 (QRDIEGRVVENISKRCGGFLRKLSLRG), 101-126 (CLGVGDNALRTFAQNCRNIEVLSLNG), 127-152 (CTKTTDATCTSLSKFCSKLRHLDLAS), 153-178 (CTSITNMSLKALSEGCPLLEQLNISW), 179-204 (CDQVTKDGIQALVRGCGGLKALFLKG), 205-230 (CTQLEDEALKYIGAHCPELVTLNLQT), 231-256 (CLQITDEGLITICRGCHKLQSLCASG), 257-282 (CSNITDAILNALGQNCPRLRILEVAR), 283-308 (CSQLTDVGFTTLARNCHELEKMDLEE), 309-334 (CVQITDSTLIQLSIHCPRLQVLSLSH), 335-363 (CELITDDGIRHLGNGACAHDQLEVIELDN), 364-388 (CPLITDASLEHLKSCHSLERIELYD), and 389-414 (CQQITRAGIKRLRTHLPNIKVHAYFA). At Thr417 the chain carries Phosphothreonine. Phosphoserine is present on Ser421.

As to quaternary structure, interacts with SKP1 and CUL1. In terms of tissue distribution, highly expressed in brain.

It is found in the cytoplasm. Functionally, substrate-recognition component of the SCF (SKP1-CUL1-F-box protein)-type E3 ubiquitin ligase complex. Isoform 3 regulates neural transmission by binding and ubiquitinating RIMS1, a modulator of presynaptic plasticity. This chain is F-box/LRR-repeat protein 20 (Fbxl20), found in Mus musculus (Mouse).